A 199-amino-acid polypeptide reads, in one-letter code: Prolactin-2 (199 aa).

3 cysteine pairs are disulfide-bonded: Cys4–Cys11, Cys58–Cys174, and Cys191–Cys199.

It belongs to the somatotropin/prolactin family.

The protein resides in the secreted. In Crocodylus novaeguineae (Crocodile), this protein is Prolactin-2.